The sequence spans 261 residues: Kallikrein 1-related peptidase b5 (261 aa).

An N-terminal signal peptide occupies residues 1–18 (MWFLILFLALSLGGIDAA). The propeptide at 19 to 24 (PPVQSR) is activation peptide. The region spanning 25–258 (IFGGFNCEKN…FNSWIKDTIA (234 aa)) is the Peptidase S1 domain. 5 disulfide bridges follow: Cys31–Cys173, Cys50–Cys66, Cys152–Cys219, Cys184–Cys198, and Cys209–Cys234. His65 serves as the catalytic Charge relay system. Asn102 is a glycosylation site (N-linked (GlcNAc...) asparagine). The active-site Charge relay system is Asp120. The active-site Charge relay system is Ser213.

This sequence belongs to the peptidase S1 family. Kallikrein subfamily.

It carries out the reaction Preferential cleavage of Arg-|-Xaa bonds in small molecule substrates. Highly selective action to release kallidin (lysyl-bradykinin) from kininogen involves hydrolysis of Met-|-Xaa or Leu-|-Xaa.. Glandular kallikreins cleave Met-Lys and Arg-Ser bonds in kininogen to release Lys-bradykinin. This is Kallikrein 1-related peptidase b5 (Klk1b5) from Mus musculus (Mouse).